A 434-amino-acid chain; its full sequence is Glutamyl-tRNA reductase (434 aa).

Residues 52 to 55 (TCNR), Ser-115, 120 to 122 (ETQ), and Gln-126 contribute to the substrate site. Cys-53 acts as the Nucleophile in catalysis. NADP(+) is bound at residue 195 to 200 (GAGEMI).

The protein belongs to the glutamyl-tRNA reductase family. Homodimer.

It catalyses the reaction (S)-4-amino-5-oxopentanoate + tRNA(Glu) + NADP(+) = L-glutamyl-tRNA(Glu) + NADPH + H(+). It participates in porphyrin-containing compound metabolism; protoporphyrin-IX biosynthesis; 5-aminolevulinate from L-glutamyl-tRNA(Glu): step 1/2. In terms of biological role, catalyzes the NADPH-dependent reduction of glutamyl-tRNA(Glu) to glutamate 1-semialdehyde (GSA). The protein is Glutamyl-tRNA reductase of Cupriavidus necator (strain ATCC 17699 / DSM 428 / KCTC 22496 / NCIMB 10442 / H16 / Stanier 337) (Ralstonia eutropha).